Here is a 394-residue protein sequence, read N- to C-terminus: Large ribosomal subunit protein bL27m (394 aa).

A mitochondrion-targeting transit peptide spans 1-34 (MSFIKQVGKLIRPNDYSSSIFQTSFLNNVIQVRT). Disordered regions lie at residues 36-57 (TKRA…LGPK) and 145-181 (AEAE…QRAS). Residues 145 to 170 (AEAEKEENHMSRKEFLQQPELEKTRQ) are compositionally biased toward basic and acidic residues.

Belongs to the bacterial ribosomal protein bL27 family.

The protein resides in the mitochondrion. Functionally, component of the large subunit of mitochondrial ribosome. This Debaryomyces hansenii (strain ATCC 36239 / CBS 767 / BCRC 21394 / JCM 1990 / NBRC 0083 / IGC 2968) (Yeast) protein is Large ribosomal subunit protein bL27m (MRPL2).